A 263-amino-acid chain; its full sequence is 3-methyl-2-oxobutanoate hydroxymethyltransferase (263 aa).

Residues Asp44 and Asp83 each contribute to the Mg(2+) site. Residues 44–45, Asp83, and Lys112 each bind 3-methyl-2-oxobutanoate; that span reads DS. Glu114 contacts Mg(2+). The Proton acceptor role is filled by Glu181.

It belongs to the PanB family. As to quaternary structure, homodecamer; pentamer of dimers. Mg(2+) serves as cofactor.

Its subcellular location is the cytoplasm. The enzyme catalyses 3-methyl-2-oxobutanoate + (6R)-5,10-methylene-5,6,7,8-tetrahydrofolate + H2O = 2-dehydropantoate + (6S)-5,6,7,8-tetrahydrofolate. It functions in the pathway cofactor biosynthesis; (R)-pantothenate biosynthesis; (R)-pantoate from 3-methyl-2-oxobutanoate: step 1/2. Its function is as follows. Catalyzes the reversible reaction in which hydroxymethyl group from 5,10-methylenetetrahydrofolate is transferred onto alpha-ketoisovalerate to form ketopantoate. This is 3-methyl-2-oxobutanoate hydroxymethyltransferase from Nitrosospira multiformis (strain ATCC 25196 / NCIMB 11849 / C 71).